A 558-amino-acid chain; its full sequence is Adenine deaminase (558 aa).

It belongs to the metallo-dependent hydrolases superfamily. Adenine deaminase family. It depends on Mn(2+) as a cofactor.

The catalysed reaction is adenine + H2O + H(+) = hypoxanthine + NH4(+). The protein is Adenine deaminase of Deinococcus deserti (strain DSM 17065 / CIP 109153 / LMG 22923 / VCD115).